Here is a 269-residue protein sequence, read N- to C-terminus: Tryptophan synthase alpha chain (269 aa).

Catalysis depends on proton acceptor residues E49 and D60.

It belongs to the TrpA family. Tetramer of two alpha and two beta chains.

It catalyses the reaction (1S,2R)-1-C-(indol-3-yl)glycerol 3-phosphate + L-serine = D-glyceraldehyde 3-phosphate + L-tryptophan + H2O. It functions in the pathway amino-acid biosynthesis; L-tryptophan biosynthesis; L-tryptophan from chorismate: step 5/5. Functionally, the alpha subunit is responsible for the aldol cleavage of indoleglycerol phosphate to indole and glyceraldehyde 3-phosphate. This is Tryptophan synthase alpha chain from Stutzerimonas stutzeri (strain A1501) (Pseudomonas stutzeri).